A 254-amino-acid polypeptide reads, in one-letter code: MVIANSNIIFVAGLGGIGLDTSREIVKSGPKNLVLLDRIDNPAAIAELKALNPKVTITFYPYDVTVPVDETKKLLKTIFDKLKTVDLLINGAGILDDHQIERTIAVNFAGTVNTTTAILDFWDKRKGGPGGVVANICSVTGFNSIYQVPVYSASKAAALSFTMSIAKLAHITGVTAYSINPGITKTILVHKFNSWLNVEPRVAELLLEHPTQTTLQCAQNFVKAIEANQNGAIWKLDLGRLDAIEWTKHWDSGI.

10 to 33 (FVAGLGGIGLDTSREIVKSGPKNL) lines the NAD(+) pocket. Residue S138 participates in substrate binding. Y151 acts as the Proton acceptor in catalysis.

The protein belongs to the short-chain dehydrogenases/reductases (SDR) family. In terms of assembly, homodimer.

The enzyme catalyses a primary alcohol + NAD(+) = an aldehyde + NADH + H(+). The catalysed reaction is a secondary alcohol + NAD(+) = a ketone + NADH + H(+). The polypeptide is Alcohol dehydrogenase (Adh) (Drosophila picticornis (Fruit fly)).